The chain runs to 316 residues: 4-hydroxy-3-methylbut-2-enyl diphosphate reductase (316 aa).

Cys18 serves as a coordination point for [4Fe-4S] cluster. The (2E)-4-hydroxy-3-methylbut-2-enyl diphosphate site is built by His47 and His80. The dimethylallyl diphosphate site is built by His47 and His80. The isopentenyl diphosphate site is built by His47 and His80. A [4Fe-4S] cluster-binding site is contributed by Cys102. His130 is a (2E)-4-hydroxy-3-methylbut-2-enyl diphosphate binding site. His130 lines the dimethylallyl diphosphate pocket. Isopentenyl diphosphate is bound at residue His130. Glu132 functions as the Proton donor in the catalytic mechanism. Thr171 is a (2E)-4-hydroxy-3-methylbut-2-enyl diphosphate binding site. Cys201 is a binding site for [4Fe-4S] cluster. Ser229, Ser230, Asn231, and Ser274 together coordinate (2E)-4-hydroxy-3-methylbut-2-enyl diphosphate. Ser229, Ser230, Asn231, and Ser274 together coordinate dimethylallyl diphosphate. 4 residues coordinate isopentenyl diphosphate: Ser229, Ser230, Asn231, and Ser274.

Belongs to the IspH family. It depends on [4Fe-4S] cluster as a cofactor.

The catalysed reaction is isopentenyl diphosphate + 2 oxidized [2Fe-2S]-[ferredoxin] + H2O = (2E)-4-hydroxy-3-methylbut-2-enyl diphosphate + 2 reduced [2Fe-2S]-[ferredoxin] + 2 H(+). It carries out the reaction dimethylallyl diphosphate + 2 oxidized [2Fe-2S]-[ferredoxin] + H2O = (2E)-4-hydroxy-3-methylbut-2-enyl diphosphate + 2 reduced [2Fe-2S]-[ferredoxin] + 2 H(+). It participates in isoprenoid biosynthesis; dimethylallyl diphosphate biosynthesis; dimethylallyl diphosphate from (2E)-4-hydroxy-3-methylbutenyl diphosphate: step 1/1. It functions in the pathway isoprenoid biosynthesis; isopentenyl diphosphate biosynthesis via DXP pathway; isopentenyl diphosphate from 1-deoxy-D-xylulose 5-phosphate: step 6/6. Catalyzes the conversion of 1-hydroxy-2-methyl-2-(E)-butenyl 4-diphosphate (HMBPP) into a mixture of isopentenyl diphosphate (IPP) and dimethylallyl diphosphate (DMAPP). Acts in the terminal step of the DOXP/MEP pathway for isoprenoid precursor biosynthesis. In Paracoccus denitrificans (strain Pd 1222), this protein is 4-hydroxy-3-methylbut-2-enyl diphosphate reductase.